Reading from the N-terminus, the 800-residue chain is Putative antiporter subunit mnhA2 (800 aa).

20 consecutive transmembrane segments (helical) span residues 1–21, 33–53, 78–98, 118–138, 167–187, 207–227, 241–261, 273–293, 300–320, 331–351, 387–407, 424–444, 472–492, 527–547, 595–615, 627–647, 651–671, 676–696, 712–732, and 768–788; these read MSLV…LLTS, IALT…PSVI, GLSL…FFYA, LFMF…MYVF, FMIT…LYIM, ALFI…SAQF, TPVS…FLLL, YIYI…ITAL, GILA…VGIG, IASI…NHAI, LVMM…GFLS, FSLI…IFTF, PWLF…IFFV, GFNI…VLAI, IIMT…RIGL, GPLE…LIFI, LTMV…FIAM, LALT…VSFS, IIKI…IFIA, and LDTL…YTLL.

This sequence belongs to the CPA3 antiporters (TC 2.A.63) subunit A family. As to quaternary structure, may form a heterooligomeric complex that consists of seven subunits: mnhA2, mnhB2, mnhC2, mnhD2, mnhE2, mnhF2 and mnhG2.

The protein resides in the cell membrane. This is Putative antiporter subunit mnhA2 (mnhA2) from Staphylococcus aureus (strain MRSA252).